A 602-amino-acid polypeptide reads, in one-letter code: NADH-quinone oxidoreductase subunit C/D (602 aa).

The tract at residues 1–192 (MVNNMTDLTA…DPFELTKAKQ (192 aa)) is NADH dehydrogenase I subunit C. Residues 216–602 (DFMFLNLGPN…IDFVMSDVDR (387 aa)) are NADH dehydrogenase I subunit D.

This sequence in the N-terminal section; belongs to the complex I 30 kDa subunit family. The protein in the C-terminal section; belongs to the complex I 49 kDa subunit family. NDH-1 is composed of 13 different subunits. Subunits NuoB, CD, E, F, and G constitute the peripheral sector of the complex.

Its subcellular location is the cell inner membrane. It carries out the reaction a quinone + NADH + 5 H(+)(in) = a quinol + NAD(+) + 4 H(+)(out). Functionally, NDH-1 shuttles electrons from NADH, via FMN and iron-sulfur (Fe-S) centers, to quinones in the respiratory chain. The immediate electron acceptor for the enzyme in this species is believed to be ubiquinone. Couples the redox reaction to proton translocation (for every two electrons transferred, four hydrogen ions are translocated across the cytoplasmic membrane), and thus conserves the redox energy in a proton gradient. The protein is NADH-quinone oxidoreductase subunit C/D of Klebsiella pneumoniae (strain 342).